The chain runs to 75 residues: Small ribosomal subunit protein bS18 (75 aa).

It belongs to the bacterial ribosomal protein bS18 family. As to quaternary structure, part of the 30S ribosomal subunit. Forms a tight heterodimer with protein bS6.

Binds as a heterodimer with protein bS6 to the central domain of the 16S rRNA, where it helps stabilize the platform of the 30S subunit. The sequence is that of Small ribosomal subunit protein bS18 from Cereibacter sphaeroides (strain KD131 / KCTC 12085) (Rhodobacter sphaeroides).